Consider the following 305-residue polypeptide: Oxygen-dependent coproporphyrinogen-III oxidase (305 aa).

A substrate-binding site is contributed by Ser-98. His-102 and His-112 together coordinate a divalent metal cation. His-112 serves as the catalytic Proton donor. 114–116 lines the substrate pocket; the sequence is NVR. 2 residues coordinate a divalent metal cation: His-151 and His-181. The interval 246–281 is important for dimerization; sequence YVEFNLVYDRGTLFGLQSGGRTESILMSMPPLARWE. Residue 264-266 participates in substrate binding; sequence GGR.

The protein belongs to the aerobic coproporphyrinogen-III oxidase family. As to quaternary structure, homodimer. A divalent metal cation is required as a cofactor.

It localises to the cytoplasm. It carries out the reaction coproporphyrinogen III + O2 + 2 H(+) = protoporphyrinogen IX + 2 CO2 + 2 H2O. It participates in porphyrin-containing compound metabolism; protoporphyrin-IX biosynthesis; protoporphyrinogen-IX from coproporphyrinogen-III (O2 route): step 1/1. Its function is as follows. Involved in the heme biosynthesis. Catalyzes the aerobic oxidative decarboxylation of propionate groups of rings A and B of coproporphyrinogen-III to yield the vinyl groups in protoporphyrinogen-IX. The sequence is that of Oxygen-dependent coproporphyrinogen-III oxidase from Vibrio atlanticus (strain LGP32) (Vibrio splendidus (strain Mel32)).